The chain runs to 997 residues: Protein translocase subunit SecA (997 aa).

ATP-binding positions include Gln84, 102–106 (GEGKT), and Asp582. Residues 950–997 (PYVPVPEAKPEPSEVFGVERKRATPPPQPGLSRAERRRLMRQEKKRKK) are disordered. Basic and acidic residues predominate over residues 957-971 (AKPEPSEVFGVERKR). Residues 984 to 997 (ERRRLMRQEKKRKK) show a composition bias toward basic residues.

Belongs to the SecA family. Monomer and homodimer. Part of the essential Sec protein translocation apparatus which comprises SecA, SecYEG and auxiliary proteins SecDF. Other proteins may also be involved.

The protein localises to the cell inner membrane. The protein resides in the cytoplasm. The enzyme catalyses ATP + H2O + cellular proteinSide 1 = ADP + phosphate + cellular proteinSide 2.. Part of the Sec protein translocase complex. Interacts with the SecYEG preprotein conducting channel. Has a central role in coupling the hydrolysis of ATP to the transfer of proteins into and across the cell membrane, serving as an ATP-driven molecular motor driving the stepwise translocation of polypeptide chains across the membrane. In Thermus thermophilus (strain ATCC BAA-163 / DSM 7039 / HB27), this protein is Protein translocase subunit SecA.